A 58-amino-acid polypeptide reads, in one-letter code: MTCTRTLLVLNRMLALKANFVLHSVKSYLNVSGVNKTLPAKGSAGVKNGFILSHLGCQ.

The protein resides in the plastid. The protein localises to the chloroplast. This is an uncharacterized protein from Chlamydomonas reinhardtii (Chlamydomonas smithii).